The following is a 511-amino-acid chain: mRNA export factor (511 aa).

Positions 1 to 15 (MATDIDMLIDLGLDL) are enriched in low complexity. A disordered region spans residues 1–244 (MATDIDMLID…ERKAPAADTI (244 aa)). Positions 5 to 17 (IDMLIDLGLDLSD) match the Nuclear export signal motif. Phosphoserine; by host is present on residues Ser-16 and Ser-18. Acidic residues-rich tracts occupy residues 16 to 26 (SDSDLDEDPPE) and 35 to 51 (LESD…EDME). Positions 104 to 112 (VWSRLGARR) are interaction with host ALYREF. Positions 110–138 (ARRPSCSPEQHGGKVARLQPPPTKAQPAR) match the Nuclear localization signal motif. Ser-114 bears the Phosphoserine; by host mark. Arg-138 is subject to Dimethylated arginine; by host. The segment at 138 to 152 (RGGRRGRRRGRGRGG) is RGG-box. Residues 139 to 149 (GGRRGRRRGRG) show a composition bias toward basic residues. Arg-148 carries the post-translational modification Omega-N-methylarginine; by host. At Arg-150 the chain carries Dimethylated arginine; by host. Residues 213–232 (APPPLMTLAIAPPPADPRAP) are compositionally biased toward pro residues. Residues Cys-399, His-478, Cys-482, and Cys-487 each contribute to the Zn(2+) site. The CHC2-type zinc-finger motif lies at 399-487 (CYLKARGLCG…HRQECSSRVC (89 aa)).

It belongs to the HHV-1 ICP27 protein family. As to quaternary structure, interacts with host RBP1; this interaction facilitates the RNA polymerase recruitment to viral transcription sites. Interacts (via the RGG box) with host ALYREF/THOC4; this interaction recruits ALYREF to viral replication compartments and probably directs viral mRNA to the TAP/NFX1 pathway. Interacts (via the RGG box) with host SRPK1; this interaction relocalizes SRPK1 to the nucleus and seems to alter its activity. Interacts with ICP4; this interaction modulates ICP4 DNA-binding activity. Interacts with host NXF1; this interaction allows efficient export of HSV-1 early and late transcripts. In terms of processing, methylated within the RGG box possibly by host PRMT1. When hypomethylated, ICP27 is exported to the cytoplasm earlier and more rapidly. Phosphorylated.

It is found in the host cytoplasm. Its subcellular location is the host nucleus. Multifunctional regulator of the expression of viral genes that contributes to the shutoff of host protein synthesis and mediates nuclear export of viral intronless mRNAs. Early in infection, this immediate early (EI) protein mediates the inhibition of cellular splicing. This results in the accumulation of unprocessed 3'end pre-mRNAs which can't be exported from the nucleus. Cellular protein synthesis is thereby shut off early after virus infection. Later in the infection, it helps recruit cellular RNA polymerase II to viral replication sites and promotes the nuclear export of viral intronless mRNAs by interacting with mRNAs and host NXF1/TAP. ICP27 binds to NUP62 which may provide facilitated viral mRNA export and may compete with some host cell transport receptors for binding and inhibit cellular nucleocytoplasmic transport pathways. Also stimulates translation of viral transcripts. Repression of host gene expression blocks the cell cycle at the G1 phase and prevents apoptosis. Seems to silence the 3' splice site of the promyelocytic leukemia (PML) intron 7a, thereby switching PML isoforms from PML-II to PML-V. This could be linked to the accelerated mRNA export induced by ICP27 which might not provide sufficient time for PML pre-mRNA to be spliced in the nucleus. The polypeptide is mRNA export factor (Human herpesvirus 1 (strain HFEM) (HHV-1)).